A 482-amino-acid polypeptide reads, in one-letter code: Pre-glycoprotein polyprotein GP complex (482 aa).

Residue glycine 2 is the site of N-myristoyl glycine; by host attachment. Residues 2-17 are Extracellular-facing; it reads GQFISFMQEIPIFLQE. Residues 18–32 traverse the membrane as a helical segment; sequence ALNIALVAVSLICIV. Position 33 (lysine 33) is a topological domain, cytoplasmic. Residues 34–53 traverse the membrane as a helical segment; sequence GLVNLYRCGLFQLMVFLVLA. 2 consecutive stretches face the extracellular side: residues 54 to 58 and 59 to 421; these read GRSCS and EETF…TLVD. Cysteine 57 is a Zn(2+) binding site. N-linked (GlcNAc...) asparagine; by host glycosylation is found at asparagine 83 and asparagine 95. 5 disulfide bridges follow: cysteine 92-cysteine 224, cysteine 134-cysteine 162, cysteine 205-cysteine 211, cysteine 269-cysteine 282, and cysteine 353-cysteine 374. N-linked (GlcNAc...) asparagine; by host glycans are attached at residues asparagine 164 and asparagine 176. Asparagine 354, asparagine 362, asparagine 379, and asparagine 384 each carry an N-linked (GlcNAc...) asparagine; by host glycan. The helical transmembrane segment at 422–442 threads the bilayer; sequence ICFWSTEFFISTLFLHLIGFP. Over 443 to 482 the chain is Cytoplasmic; the sequence is THEHIRGEGCPLPHRLNSMGGCRCGKYLPLKKPTIWHRRH. 7 residues coordinate Zn(2+): histidine 444, histidine 446, cysteine 452, histidine 456, cysteine 464, cysteine 466, and histidine 482.

It belongs to the arenaviridae GPC protein family. As to quaternary structure, homotetramer; disulfide-linked. In terms of assembly, homotetramer. GP2 homotetramers bind through ionic interactions with GP1 homotetramers to form the GP complex together with the stable signal peptide. The GP-C polyprotein interacts with the host protease MBTPS1/SKI-1 resulting in the polyprotein processing. Post-translationally, specific enzymatic cleavages in vivo yield mature proteins. GP-C polyprotein is cleaved in the endoplasmic reticulum by the host protease MBTPS1. Only cleaved glycoprotein is incorporated into virions. In terms of processing, the SSP remains stably associated with the GP complex following cleavage by signal peptidase and plays crucial roles in the trafficking of GP through the secretory pathway. Myristoylation is necessary for GP2-mediated fusion activity.

It localises to the virion membrane. Its subcellular location is the host endoplasmic reticulum membrane. The protein resides in the host Golgi apparatus membrane. The protein localises to the host cell membrane. In terms of biological role, class I viral fusion protein that directs fusion of viral and host endosomal membranes, leading to delivery of the nucleocapsid into the cytoplasm. Membrane fusion is mediated by irreversible conformational changes induced upon acidification in the endosome. Functionally, stable signal peptide (SSP): cleaved and functions as a signal peptide. In addition, it is also retained as the third component of the GP complex. The SSP is required for efficient glycoprotein expression, post-translational maturation cleavage of GP1 and GP2, glycoprotein transport to the cell surface plasma membrane, formation of infectious virus particles, and acid pH-dependent glycoprotein-mediated cell fusion. Interacts with the host receptor. The chain is Pre-glycoprotein polyprotein GP complex from Artibeus (neotropical fruit bats).